A 1209-amino-acid polypeptide reads, in one-letter code: MPKDSSEHQKSPSRFTRSMFVDPRAFVRRSVSPVDQLCHSVADLRFVSSNTETLESRLQALSKKFDNGSENHGQDTDTVEDVAKTQYMAKSFAGLIATASMYVGINELGDKEENDEDELELMNDAASVLDTSSQANQTLFEVSIEMNADAISQISTDSKSRKELIRERLIKKFLPNDDEKYIEEYPCWLLRDIMIQGHAYLTNKHLFFFAFIPNFESDFNVTGSLRLISGHVLSKSHRYWVVLKGHTLSFHNSSTDLYFPLLTIDLRDISSVQMTSSENNPTKFELSIKDQSLVLKADSFHSARHWVSSIKKQMFASQHSDTNTMTIKIPLQNIVDLEETSILDKSGTLRIKALENLSTYAVDEYFFVFFKGNANAMKQKVNSLLKDLEMNGSQILVNFNKVDSPLGINEKLPDLNYDDPSNENNLVDDADINSAETDTLSPGTMQSALTLQQTSSAFSPRHSAYPRKVKKKLKSMAGSLKLGSPSKFTKLEDDIIIEHYSPGLINDQTIDYDKDSKSIISRLTPKKFQNVPLMWAADPVHFNSDDGIVFPLDDKYTADADISNQSNVRFRQHFSFDETANLVASYHGYLNRNVPIYGKIYISDKNICFRSLLPGVSTKTVLPLEDVENCYKETRFRFGYFGLVIVIHGHEELFLEFGNKNARDDCEFVMIKVMDAVSSHRSTLKRKSTAEVVHRLSEAASLKLLEEKISEQGFDIPLIVEKNPYFTTVIKPSKSYKFGLLTIGSRGDVQPYIALAKGLQAEGHEVIILTHGEFKDWIVSHNIGFREISGNPAELISLMVQHGSMNMGLLRDASTNFSTWISSLLDTAWEGCQGIDILIESPSAMAGIHIAEALRIPYFRAFTMPWTRTRAYPHAFIVPDQKRGGNYNYFTHVLFENIFWKGISGKVNEWRETKLKLPKTNLVSMQQNRVPFLYNVSPIVFPPSVDFNEWIKVTGYWFLDEKRSYKPPAEFMEFLNKARELKKKVVYIGFGSIVVNDPEKMTDTIIEAVRDAGVYCVLNKGWSNRFGDPLAKKIDKELPSYIYNSGDVPHDWLFTKIDATVHHGGSGTTGASLRAGLPTIIKPFFGDQFFYASRVEDIGAGVALKKLNRSSLAKALKEVTTNTRIIQKARQIGESISKEHGVATAIGAIYSELGYARSLIKTKNPVDDKEMEAASTKLSNDAVVTAKGNEKEEYSSEGSGSNDGSWLLI.

A GRAM 1 domain is found at glutamate 167–serine 217. Residues aspartate 218–phenylalanine 315 form the PH domain. Residues valine 568–threonine 634 form the GRAM 2 domain. 12 residues coordinate UDP-alpha-D-glucose: serine 745, arginine 746, aspartate 748, asparagine 1019, valine 1048, histidine 1050, histidine 1063, serine 1066, glycine 1067, threonine 1068, aspartate 1087, and glutamine 1088. Residues alanine 1186 to isoleucine 1209 are disordered. Residues serine 1196 to isoleucine 1209 are compositionally biased toward low complexity.

The protein belongs to the glycosyltransferase 28 family.

The protein resides in the cytoplasm. It is found in the membrane. It carries out the reaction a sterol + UDP-alpha-D-glucose = a sterol 3-beta-D-glucoside + UDP + H(+). It catalyses the reaction ergosterol + UDP-alpha-D-glucose = ergosteryl 3-beta-D-glucoside + UDP + H(+). Functionally, sterol glycosyltransferase responsible for the glycosylation of ergosterol to form ergosterol-glucoside. The polypeptide is Sterol 3-beta-glucosyltransferase (Kluyveromyces lactis (strain ATCC 8585 / CBS 2359 / DSM 70799 / NBRC 1267 / NRRL Y-1140 / WM37) (Yeast)).